The sequence spans 224 residues: Ribonuclease HII (224 aa).

The region spanning 1–210 (MKLGGIDEAG…LKKIEEKLQK (210 aa)) is the RNase H type-2 domain. Aspartate 7, glutamate 8, and aspartate 105 together coordinate a divalent metal cation.

This sequence belongs to the RNase HII family. Requires Mn(2+) as cofactor. Mg(2+) is required as a cofactor.

Its subcellular location is the cytoplasm. The catalysed reaction is Endonucleolytic cleavage to 5'-phosphomonoester.. Its function is as follows. Endonuclease that specifically degrades the RNA of RNA-DNA hybrids. The protein is Ribonuclease HII of Thermococcus sibiricus (strain DSM 12597 / MM 739).